A 405-amino-acid polypeptide reads, in one-letter code: Magnesium-protoporphyrin IX monomethyl ester [oxidative] cyclase, chloroplastic (405 aa).

Residues 1 to 44 (MAAEMALVKPITPKFINPMRTFSSSSKFSTIKMSATSQSNTTTT) constitute a chloroplast transit peptide. Over residues 33–47 (MSATSQSNTTTTATK) the composition is skewed to low complexity. The disordered stretch occupies residues 33–54 (MSATSQSNTTTTATKPSKKGNK).

It belongs to the AcsF family. It depends on Fe cation as a cofactor.

It localises to the plastid. Its subcellular location is the chloroplast. The enzyme catalyses Mg-protoporphyrin IX 13-monomethyl ester + 3 NADPH + 3 O2 + 2 H(+) = 3,8-divinyl protochlorophyllide a + 3 NADP(+) + 5 H2O. It participates in porphyrin-containing compound metabolism; chlorophyll biosynthesis. Functionally, catalyzes the formation of the isocyclic ring in chlorophyll biosynthesis. Mediates the cyclase reaction, which results in the formation of divinylprotochlorophyllide (Pchlide) characteristic of all chlorophylls from magnesium-protoporphyrin IX 13-monomethyl ester (MgPMME). The polypeptide is Magnesium-protoporphyrin IX monomethyl ester [oxidative] cyclase, chloroplastic (CRD1) (Euphorbia esula (Leafy spurge)).